Reading from the N-terminus, the 198-residue chain is Phosphoheptose isomerase (198 aa).

An SIS domain is found at 36 to 198 (MIGSLLNNGK…DCLLLGVEDQ (163 aa)). 51–53 (NGG) serves as a coordination point for substrate. Positions 60 and 64 each coordinate Zn(2+). Substrate is bound by residues Glu-64, 93–94 (ND), 119–121 (STS), Ser-124, and Gln-174. Positions 174 and 182 each coordinate Zn(2+).

Belongs to the SIS family. GmhA subfamily. Homotetramer. It depends on Zn(2+) as a cofactor.

The protein localises to the cytoplasm. The enzyme catalyses 2 D-sedoheptulose 7-phosphate = D-glycero-alpha-D-manno-heptose 7-phosphate + D-glycero-beta-D-manno-heptose 7-phosphate. It participates in carbohydrate biosynthesis; D-glycero-D-manno-heptose 7-phosphate biosynthesis; D-glycero-alpha-D-manno-heptose 7-phosphate and D-glycero-beta-D-manno-heptose 7-phosphate from sedoheptulose 7-phosphate: step 1/1. Functionally, catalyzes the isomerization of sedoheptulose 7-phosphate in D-glycero-D-manno-heptose 7-phosphate. In Aromatoleum aromaticum (strain DSM 19018 / LMG 30748 / EbN1) (Azoarcus sp. (strain EbN1)), this protein is Phosphoheptose isomerase.